Reading from the N-terminus, the 496-residue chain is Glutamyl-tRNA(Gln) amidotransferase subunit A (496 aa).

Catalysis depends on charge relay system residues K75 and S150. S174 (acyl-ester intermediate) is an active-site residue.

Belongs to the amidase family. GatA subfamily. Heterotrimer of A, B and C subunits.

The catalysed reaction is L-glutamyl-tRNA(Gln) + L-glutamine + ATP + H2O = L-glutaminyl-tRNA(Gln) + L-glutamate + ADP + phosphate + H(+). Functionally, allows the formation of correctly charged Gln-tRNA(Gln) through the transamidation of misacylated Glu-tRNA(Gln) in organisms which lack glutaminyl-tRNA synthetase. The reaction takes place in the presence of glutamine and ATP through an activated gamma-phospho-Glu-tRNA(Gln). This is Glutamyl-tRNA(Gln) amidotransferase subunit A from Burkholderia cenocepacia (strain HI2424).